A 357-amino-acid chain; its full sequence is MNELNSVVDSAKAAFEQARTPADLENAKALFLGKSGRITELMKGMAALAVDEKKTRGAAINLAKQAIEVALNNRRQALADAELQAQLQAEALDVTLPGRQRGQGSLHPVSLTLERIEAIFGSMGFDVAQGPEIESDWFNFTALNTPEDHPARSMHDTFYVEGGTATAPNLLRTHSSPMQIRYAVQHVKRHRAAVGVGQVEGLFSGDMPEIRVIAPGRTYRVDSDATHSPMFHQCEGLWVGENVSFKDLKFVFTDFCRTFFESDDLVLRFRPSFFPFTEPSAEIDIQFQSGPLAGRWLEVAGSGQVHPNVIRNMGLEPEKYIGFAFGMGPDRLAMLRYGVNDLRLFFDGDVRFLSQFQ.

Glutamate 278 is a Mg(2+) binding site.

The protein belongs to the class-II aminoacyl-tRNA synthetase family. Phe-tRNA synthetase alpha subunit type 1 subfamily. As to quaternary structure, tetramer of two alpha and two beta subunits. Requires Mg(2+) as cofactor.

Its subcellular location is the cytoplasm. The enzyme catalyses tRNA(Phe) + L-phenylalanine + ATP = L-phenylalanyl-tRNA(Phe) + AMP + diphosphate + H(+). The sequence is that of Phenylalanine--tRNA ligase alpha subunit from Albidiferax ferrireducens (strain ATCC BAA-621 / DSM 15236 / T118) (Rhodoferax ferrireducens).